We begin with the raw amino-acid sequence, 483 residues long: Protein nucleotidyltransferase YdiU (483 aa).

ATP is bound by residues Gly-87, Gly-89, Arg-90, Lys-110, Asp-122, Gly-123, Arg-173, and Arg-180. The Proton acceptor role is filled by Asp-249. Mg(2+) contacts are provided by Asn-250 and Asp-259. Position 259 (Asp-259) interacts with ATP.

Belongs to the SELO family. Mg(2+) is required as a cofactor. Mn(2+) serves as cofactor.

It catalyses the reaction L-seryl-[protein] + ATP = 3-O-(5'-adenylyl)-L-seryl-[protein] + diphosphate. It carries out the reaction L-threonyl-[protein] + ATP = 3-O-(5'-adenylyl)-L-threonyl-[protein] + diphosphate. The catalysed reaction is L-tyrosyl-[protein] + ATP = O-(5'-adenylyl)-L-tyrosyl-[protein] + diphosphate. The enzyme catalyses L-histidyl-[protein] + UTP = N(tele)-(5'-uridylyl)-L-histidyl-[protein] + diphosphate. It catalyses the reaction L-seryl-[protein] + UTP = O-(5'-uridylyl)-L-seryl-[protein] + diphosphate. It carries out the reaction L-tyrosyl-[protein] + UTP = O-(5'-uridylyl)-L-tyrosyl-[protein] + diphosphate. Its function is as follows. Nucleotidyltransferase involved in the post-translational modification of proteins. It can catalyze the addition of adenosine monophosphate (AMP) or uridine monophosphate (UMP) to a protein, resulting in modifications known as AMPylation and UMPylation. The protein is Protein nucleotidyltransferase YdiU of Pelagibacter ubique (strain HTCC1062).